Here is a 288-residue protein sequence, read N- to C-terminus: Glycine--tRNA ligase alpha subunit (288 aa).

It belongs to the class-II aminoacyl-tRNA synthetase family. As to quaternary structure, tetramer of two alpha and two beta subunits.

It is found in the cytoplasm. It catalyses the reaction tRNA(Gly) + glycine + ATP = glycyl-tRNA(Gly) + AMP + diphosphate. This chain is Glycine--tRNA ligase alpha subunit, found in Rickettsia peacockii (strain Rustic).